The following is a 450-amino-acid chain: Citrate/malate-proton symporter (450 aa).

The Cytoplasmic portion of the chain corresponds to 1-32 (MGELQTHMQLQTDTIHEGVRKENWFAKAMNIK). Residues 33–53 (VGIIPLPVYALLFILITVFVM) form a helical membrane-spanning segment. Topologically, residues 54–64 (HHDVKSDILTS) are extracellular. Residues 65–85 (IAVMAFFGFTFAQIGKSIPIV) form a helical membrane-spanning segment. Residues 86–87 (RS) lie on the Cytoplasmic side of the membrane. A helical transmembrane segment spans residues 88–108 (IGGPAILATFIPSAVVYYHLL). The Extracellular segment spans residues 109 to 118 (PNDIVKSTTE). Residues 119-139 (FTENSNFLYLFIAGIVVGSIL) form a helical membrane-spanning segment. At 140-152 (GMKRETLVKAFMK) the chain is on the cytoplasmic side. A helical transmembrane segment spans residues 153–173 (IFIPLIVGSVTAAIVGLAVGT). The Extracellular segment spans residues 174 to 217 (LLGLGFQHTLLYIVIPIMAGGVGEGAIPLSIGYSDIMPISQGEA). The helical transmembrane segment at 218 to 238 (FALVLPSIMLGSLCAIILAGL) threads the bilayer. The Cytoplasmic portion of the chain corresponds to 239 to 273 (LNRIGKKKPEWTGNGKVDRSEEESPALEESQSGQQ). Residues 249-268 (WTGNGKVDRSEEESPALEES) form a disordered region. Residues 274–294 (MFNLSLFASGGILAVSLYLVG) traverse the membrane as a helical segment. Position 295 (methionine 295) is a topological domain, extracellular. A helical transmembrane segment spans residues 296 to 316 (LAHDFFGFPAPVAMLLLAVLI). The Cytoplasmic segment spans residues 317 to 335 (KLFRLVPASIENGAFGVSR). A helical transmembrane segment spans residues 336 to 356 (FFSTAVTYPLLFAIGVSMTPW). At 357 to 364 (DKLVAAFN) the chain is on the extracellular side. Residues 365 to 385 (LSNIITILSVVVTMMAVGFFT) traverse the membrane as a helical segment. Topologically, residues 386–428 (GKWLNMYPIETAIINACHSGQGGTGDVAILSAAERLELMPFAQ) are cytoplasmic. The chain crosses the membrane as a helical span at residues 429–446 (VSTRIGGAITVSLTLLLL). Residues 447-450 (HQFY) are Extracellular-facing.

This sequence belongs to the 2-hydroxycarboxylate transporter (2-HCT) (TC 2.A.24) family.

Its subcellular location is the cell membrane. The catalysed reaction is citrate(in) + 3 H(+)(in) = citrate(out) + 3 H(+)(out). It catalyses the reaction (S)-malate(in) + 2 H(+)(in) = (S)-malate(out) + 2 H(+)(out). Its activity is regulated as follows. The uptake activity is inhibited by divalent metal ions such as Ca(2+), Mg(2+) and Ni(2+). Functionally, proton motive force-driven secondary transporter that catalyzes the uptake of both citrate and malate. Is an electroneutral proton-solute symporter: the number of protons transported is equal to the valence of the transported anions. Translocates the free citrate and malate anions. Citramalate binds to the transporter, but it is not translocated. Is strictly stereoselective, recognizing only the (S)-enantiomers of malate and citramalate. The protein is Citrate/malate-proton symporter of Bacillus subtilis (strain 168).